A 125-amino-acid polypeptide reads, in one-letter code: NADPH-dependent 7-cyano-7-deazaguanine reductase (125 aa).

The active-site Thioimide intermediate is the cysteine 41. Aspartate 48 serves as the catalytic Proton donor. Substrate-binding positions include 63-65 (VEL) and 82-83 (HE).

The protein belongs to the GTP cyclohydrolase I family. QueF type 1 subfamily.

It localises to the cytoplasm. It carries out the reaction 7-aminomethyl-7-carbaguanine + 2 NADP(+) = 7-cyano-7-deazaguanine + 2 NADPH + 3 H(+). The protein operates within tRNA modification; tRNA-queuosine biosynthesis. Its function is as follows. Catalyzes the NADPH-dependent reduction of 7-cyano-7-deazaguanine (preQ0) to 7-aminomethyl-7-deazaguanine (preQ1). This Sulfurimonas denitrificans (strain ATCC 33889 / DSM 1251) (Thiomicrospira denitrificans (strain ATCC 33889 / DSM 1251)) protein is NADPH-dependent 7-cyano-7-deazaguanine reductase.